Reading from the N-terminus, the 93-residue chain is Small ribosomal subunit protein uS19 (93 aa).

This sequence belongs to the universal ribosomal protein uS19 family.

Protein S19 forms a complex with S13 that binds strongly to the 16S ribosomal RNA. The chain is Small ribosomal subunit protein uS19 from Nautilia profundicola (strain ATCC BAA-1463 / DSM 18972 / AmH).